We begin with the raw amino-acid sequence, 149 residues long: D-aminoacyl-tRNA deacylase (149 aa).

A Gly-cisPro motif, important for rejection of L-amino acids motif is present at residues 141–142 (GP).

The protein belongs to the DTD family. As to quaternary structure, homodimer.

The protein localises to the cytoplasm. The enzyme catalyses glycyl-tRNA(Ala) + H2O = tRNA(Ala) + glycine + H(+). It carries out the reaction a D-aminoacyl-tRNA + H2O = a tRNA + a D-alpha-amino acid + H(+). An aminoacyl-tRNA editing enzyme that deacylates mischarged D-aminoacyl-tRNAs. Also deacylates mischarged glycyl-tRNA(Ala), protecting cells against glycine mischarging by AlaRS. Acts via tRNA-based rather than protein-based catalysis; rejects L-amino acids rather than detecting D-amino acids in the active site. By recycling D-aminoacyl-tRNA to D-amino acids and free tRNA molecules, this enzyme counteracts the toxicity associated with the formation of D-aminoacyl-tRNA entities in vivo and helps enforce protein L-homochirality. The sequence is that of D-aminoacyl-tRNA deacylase from Hydrogenovibrio crunogenus (strain DSM 25203 / XCL-2) (Thiomicrospira crunogena).